A 197-amino-acid chain; its full sequence is UPF0301 protein Adeh_3962 (197 aa).

Belongs to the UPF0301 (AlgH) family.

The protein is UPF0301 protein Adeh_3962 of Anaeromyxobacter dehalogenans (strain 2CP-C).